The primary structure comprises 299 residues: uncharacterized protein (299 aa).

Catalysis depends on charge relay system residues threonine 47 and tyrosine 109. Tyrosine 138 acts as the Proton donor in catalysis. The active-site Schiff-base intermediate with substrate is the lysine 168.

This sequence belongs to the DapA family. In terms of assembly, homotetramer.

The protein localises to the cytoplasm. This is an uncharacterized protein from Chloroflexus aurantiacus (strain ATCC 29366 / DSM 635 / J-10-fl).